Reading from the N-terminus, the 320-residue chain is Eukaryotic translation initiation factor 3 subunit G (320 aa).

The tract at residues 1–60 (MPTGDFDSKPSWADQVEEEGEDDKCVTSELLKGIPLPTGDTSPEPELLPGDPLPPPKEVI) is disordered. 2 positions are modified to phosphoserine: Ser-8 and Ser-11. Phosphothreonine occurs at positions 38 and 41. Residues Ser-42, Ser-189, Ser-223, and Ser-264 each carry the phosphoserine modification. Residues 204-233 (QAAQSKTGKYVPPSLRDGASRRGESMQPNR) are disordered. Residues 221–233 (GASRRGESMQPNR) are compositionally biased toward basic and acidic residues. Residues 239 to 317 (ATIRVTNLSE…LILNVEWAKP (79 aa)) enclose the RRM domain.

This sequence belongs to the eIF-3 subunit G family. Component of the eukaryotic translation initiation factor 3 (eIF-3) complex, which is composed of 13 subunits: EIF3A, EIF3B, EIF3C, EIF3D, EIF3E, EIF3F, EIF3G, EIF3H, EIF3I, EIF3J, EIF3K, EIF3L and EIF3M. The eIF-3 complex appears to include 3 stable modules: module A is composed of EIF3A, EIF3B, EIF3G and EIF3I; module B is composed of EIF3F, EIF3H, and EIF3M; and module C is composed of EIF3C, EIF3D, EIF3E, EIF3K and EIF3L. EIF3C of module C binds EIF3B of module A and EIF3H of module B, thereby linking the three modules. EIF3J is a labile subunit that binds to the eIF-3 complex via EIF3B. The eIF-3 complex may interact with RPS6KB1 under conditions of nutrient depletion. Mitogenic stimulation may lead to binding and activation of a complex composed of MTOR and RPTOR, leading to phosphorylation and release of RPS6KB1 and binding of EIF4B to eIF-3. Interacts (via C-terminus) with AIFM1 (via N-terminus). Interacts with DHX33; the interaction is independent of RNA. Phosphorylated. Phosphorylation is enhanced upon serum stimulation.

It is found in the cytoplasm. The protein localises to the nucleus. The protein resides in the perinuclear region. Functionally, RNA-binding component of the eukaryotic translation initiation factor 3 (eIF-3) complex, which is required for several steps in the initiation of protein synthesis. The eIF-3 complex associates with the 40S ribosome and facilitates the recruitment of eIF-1, eIF-1A, eIF-2:GTP:methionyl-tRNAi and eIF-5 to form the 43S pre-initiation complex (43S PIC). The eIF-3 complex stimulates mRNA recruitment to the 43S PIC and scanning of the mRNA for AUG recognition. The eIF-3 complex is also required for disassembly and recycling of post-termination ribosomal complexes and subsequently prevents premature joining of the 40S and 60S ribosomal subunits prior to initiation. The eIF-3 complex specifically targets and initiates translation of a subset of mRNAs involved in cell proliferation, including cell cycling, differentiation and apoptosis, and uses different modes of RNA stem-loop binding to exert either translational activation or repression. This subunit can bind 18S rRNA. This chain is Eukaryotic translation initiation factor 3 subunit G (Eif3g), found in Mus musculus (Mouse).